The primary structure comprises 520 residues: Beta-2-syntrophin (520 aa).

Residues 45–95 (EPPAAAFNGLPNGGGGESLPGSPNRGLGPPSPPAPPRGPAGEASASPPVRR) are disordered. Low complexity predominate over residues 63 to 72 (LPGSPNRGLG). Pro residues predominate over residues 73–82 (PPSPPAPPRG). A phosphoserine mark is found at Ser75, Ser90, Ser109, Ser191, Ser202, Ser213, Ser373, and Ser375. The span at 83 to 93 (PAGEASASPPV) shows a compositional bias: low complexity. The 84-residue stretch at 95–178 (RVRVVKQEAG…EVLLEVKFIR (84 aa)) folds into the PDZ domain. PH domains follow at residues 143–280 (ILSV…TNIM) and 305–417 (EVKH…QGCH). A disordered region spans residues 195-220 (WEGASPQSPSFSGSEDSGSPKHQNTT). Residues 197-211 (GASPQSPSFSGSEDS) are compositionally biased toward low complexity. The region spanning 464–520 (PFERLKMSADDGIRNLYLDFGGPEGELTMDLHSCPKPIVFVLHTFLSAKVTRMGLLV) is the SU domain. Positions 498-520 (PKPIVFVLHTFLSAKVTRMGLLV) are calmodulin-binding.

It belongs to the syntrophin family. As to quaternary structure, monomer and homodimer. Interacts with the dystrophin protein DMD and related protein DTNA; and with the other members of the syntrophin family: SNTA1 and SNTB1. Interacts with the neuroregulin receptor ERBB4. Interacts with PTPRN when phosphorylated, protecting PTPRN from protein cleavage by CAPN1. Dephosphorylation upon insulin stimulation disrupts the interaction with PTPRN and results in the cleavage of PTPRN. Interacts with the sodium channel proteins SCN4A and SCN5A. Interacts with SAST, MAST205, microtubules and microtubule-associated proteins. Interacts with the dystrophin related protein UTRN. Interacts with DTNB. Post-translationally, phosphorylated. Partially dephosphorylated upon insulin stimulation. In terms of tissue distribution, ubiquitous. Expressed at high levels in the testis.

The protein resides in the membrane. The protein localises to the cytoplasmic vesicle. It is found in the secretory vesicle membrane. Its subcellular location is the cell junction. It localises to the cytoplasm. The protein resides in the cytoskeleton. Adapter protein that binds to and probably organizes the subcellular localization of a variety of membrane proteins. May link various receptors to the actin cytoskeleton and the dystrophin glycoprotein complex. May play a role in the regulation of secretory granules via its interaction with PTPRN. The protein is Beta-2-syntrophin (Sntb2) of Mus musculus (Mouse).